Here is a 171-residue protein sequence, read N- to C-terminus: 6,7-dimethyl-8-ribityllumazine synthase (171 aa).

5-amino-6-(D-ribitylamino)uracil-binding positions include Phe-30, 64–66 (ALE), and 88–90 (AVI). (2S)-2-hydroxy-3-oxobutyl phosphate is bound at residue 93–94 (ET). His-96 acts as the Proton donor in catalysis. Position 121 (Asn-121) interacts with 5-amino-6-(D-ribitylamino)uracil. Residue Arg-135 participates in (2S)-2-hydroxy-3-oxobutyl phosphate binding.

The protein belongs to the DMRL synthase family.

The enzyme catalyses (2S)-2-hydroxy-3-oxobutyl phosphate + 5-amino-6-(D-ribitylamino)uracil = 6,7-dimethyl-8-(1-D-ribityl)lumazine + phosphate + 2 H2O + H(+). Its pathway is cofactor biosynthesis; riboflavin biosynthesis; riboflavin from 2-hydroxy-3-oxobutyl phosphate and 5-amino-6-(D-ribitylamino)uracil: step 1/2. Catalyzes the formation of 6,7-dimethyl-8-ribityllumazine by condensation of 5-amino-6-(D-ribitylamino)uracil with 3,4-dihydroxy-2-butanone 4-phosphate. This is the penultimate step in the biosynthesis of riboflavin. The sequence is that of 6,7-dimethyl-8-ribityllumazine synthase from Polynucleobacter necessarius subsp. necessarius (strain STIR1).